Reading from the N-terminus, the 417-residue chain is Gamma-glutamyl phosphate reductase (417 aa).

The protein belongs to the gamma-glutamyl phosphate reductase family.

The protein localises to the cytoplasm. It catalyses the reaction L-glutamate 5-semialdehyde + phosphate + NADP(+) = L-glutamyl 5-phosphate + NADPH + H(+). It functions in the pathway amino-acid biosynthesis; L-proline biosynthesis; L-glutamate 5-semialdehyde from L-glutamate: step 2/2. Catalyzes the NADPH-dependent reduction of L-glutamate 5-phosphate into L-glutamate 5-semialdehyde and phosphate. The product spontaneously undergoes cyclization to form 1-pyrroline-5-carboxylate. This chain is Gamma-glutamyl phosphate reductase, found in Hydrogenovibrio crunogenus (strain DSM 25203 / XCL-2) (Thiomicrospira crunogena).